Consider the following 365-residue polypeptide: Peptide chain release factor 2 (365 aa).

The residue at position 252 (glutamine 252) is an N5-methylglutamine.

This sequence belongs to the prokaryotic/mitochondrial release factor family. Methylated by PrmC. Methylation increases the termination efficiency of RF2.

Its subcellular location is the cytoplasm. Peptide chain release factor 2 directs the termination of translation in response to the peptide chain termination codons UGA and UAA. In Aeromonas hydrophila subsp. hydrophila (strain ATCC 7966 / DSM 30187 / BCRC 13018 / CCUG 14551 / JCM 1027 / KCTC 2358 / NCIMB 9240 / NCTC 8049), this protein is Peptide chain release factor 2.